The chain runs to 224 residues: Extracellular protease inhibitor 10 (224 aa).

A signal peptide spans 1 to 22 (MKSAFTLSLALVAVTATISAAA). Kazal-like domains follow at residues 23-72 (DDNC…ECAS), 90-127 (TSGTVGCPDMCLDVYDPVSDENGKEYSNQCYMEMAKCK), and 156-210 (GYQG…PCPS). Residue Asn-25 is glycosylated (N-linked (GlcNAc...) asparagine). 3 disulfide bridges follow: Cys-26–Cys-56, Cys-30–Cys-49, and Cys-38–Cys-70. The segment at 69 to 92 (ECASTPASSATPSPVTSSTGSTSG) is disordered. Residues 71 to 92 (ASTPASSATPSPVTSSTGSTSG) are compositionally biased toward low complexity. 5 disulfides stabilise this stretch: Cys-96–Cys-126, Cys-100–Cys-119, Cys-162–Cys-193, Cys-167–Cys-186, and Cys-175–Cys-208. Asn-199 carries an N-linked (GlcNAc...) asparagine glycan. Residues 202 to 224 (MVGEGPCPSQEQQQQQQQQQQKL) form a disordered region. Over residues 211–224 (QEQQQQQQQQQQKL) the composition is skewed to low complexity.

As to quaternary structure, interacts with host subtilisin-like protease P69B.

The protein localises to the secreted. Secreted effector that interacts with and inhibits the pathogenesis-related P69B subtilisin-like serine protease of host tomato. Inhibition of host proteases by a pathogen extracellular protease inhibitor forms a specific type of defense-counterdefense mechanism between plants and microbial pathogens. The sequence is that of Extracellular protease inhibitor 10 from Phytophthora infestans (Potato late blight agent).